The chain runs to 1257 residues: Period circadian protein homolog 2 (1257 aa).

A disordered region spans residues 1-60 (MNGYVDFSPSPTSPTKEPGAPQPTQAVLQEDVDMSSGSSGNENCSTGRDSQGSDCDDNGK). A compositionally biased stretch (polar residues) spans 35 to 53 (SSGSSGNENCSTGRDSQGS). The short motif at 109-118 (LIRTLKELKV) is the Nuclear export signal 1 element. The region spanning 179–246 (ITSEYIVKNA…FHSYTTPYKL (68 aa)) is the PAS 1 domain. Residues 306-310 (LCCLL) carry the LXXLL motif. Positions 319 to 385 (YEAPRIPPEK…MLAIHKKILQ (67 aa)) constitute a PAS 2 domain. Residues 393–436 (YSPIRFRTRNGEYITLDTSWSSFINPWSRKISFIIGRHKVRVGP) enclose the PAC domain. Positions 460–469 (LTEQIHRLLM) match the Nuclear export signal 2 motif. 2 disordered regions span residues 471 to 565 (PVPH…GASL) and 617 to 638 (PSRK…PSKV). The interval 478–482 (SGYGS) is important for protein stability. Residues 493 to 504 (MSQTSSSDSNGQ) show a composition bias toward polar residues. A CSNK1E binding domain region spans residues 510 to 709 (RRSGIFKTSG…GAAGGLSQEK (200 aa)). 5 positions are modified to phosphoserine: serine 525, serine 528, serine 531, serine 538, and serine 544. A Phosphothreonine modification is found at threonine 554. 6 positions are modified to phosphoserine: serine 659, serine 693, serine 697, serine 706, serine 758, and serine 763. The tract at residues 757–832 (RSRAQASDRG…SDTSQSSCPS (76 aa)) is disordered. The Nuclear localization signal motif lies at 778–794 (KKTGKNRKLKSKRVKTR). Positions 779-792 (KTGKNRKLKSKRVK) are enriched in basic residues. A compositionally biased stretch (low complexity) spans 821-832 (SPSDTSQSSCPS). Threonine 858 carries the post-translational modification Phosphothreonine. Residues 882–1067 (EFAVQPLPFA…DLCSATGSAL (186 aa)) form an interaction with PPARG region. Serine 939 is subject to Phosphoserine. The residue at position 964 (threonine 964) is a Phosphothreonine. At serine 971 the chain carries Phosphoserine. The short motif at 983–990 (LQLNLLQL) is the Nuclear export signal 3 element. The disordered stretch occupies residues 994 to 1044 (PEGSTGAAGTLGTTGTAASGLDCTSGTSRDRQPKAPPTCNEPSDTQNSDAI). A compositionally biased stretch (low complexity) spans 996–1014 (GSTGAAGTLGTTGTAASGL). Positions 1033–1044 (NEPSDTQNSDAI) are enriched in polar residues. Positions 1051–1055 (LNLLL) match the LXXLL motif. Residues 1070–1092 (SGASATSDSLGSSSLGFGTSQSG) are compositionally biased toward low complexity. The tract at residues 1070-1115 (SGASATSDSLGSSSLGFGTSQSGAGSSDTSHTSKYFGSIDSSENNH) is disordered. Residues 1093–1111 (AGSSDTSHTSKYFGSIDSS) show a composition bias toward polar residues. A Phosphoserine modification is found at serine 1126. Residues 1157-1257 (SRDLQAVLKE…LTGPRIEAQT (101 aa)) are CRY binding domain. The tract at residues 1224–1257 (PYEEDSPSPGLCDTSEAKEEEGEQLTGPRIEAQT) is disordered.

Homodimer. Component of the circadian core oscillator, which includes the CRY proteins, CLOCK or NPAS2, BMAL1 or BMAL2, CSNK1D and/or CSNK1E, TIMELESS, and the PER proteins. Interacts with CLOCK-BMAL1 (off DNA). Interacts with BMAL2. Interacts directly with PER1 and PER3, and through a C-terminal domain, with CRY1 and CRY2. Interacts (via PAS 2 domain) with TIMELESS. Interacts with NFIL3. Different large complexes have been identified with different repressive functions. The core of PER complexes is composed of at least PER1, PER2, PER3, CRY1, CRY2, CSNK1D and/or CSNK1E. The large PER complex involved in the repression of transcriptional termination is composed of at least PER2, CDK9, DDX5, DHX9, NCBP1 and POLR2A (active). The large PER complex involved in the histone deacetylation is composed of at least HDAC1, PER2, SFPQ and SIN3A. The large PER complex involved in the histone methylation is composed of at least PER2, CBX3, TRIM28, SUV39H1 and/or SUV39H2; CBX3 mediates the formation of the complex. Interacts with SETX; the interaction inhibits termination of circadian target genes. Interacts with the nuclear receptors HNF4A, NR1D1, NR4A2, RORA, PPARA, PPARG and THRA; the interaction with at least PPARG is ligand dependent. Interacts with PML. Interacts (phosphorylated) with BTRC and FBXW11; the interactions trigger proteasomal degradation. Interacts with NONO and SFPQ. Interacts with CAVIN3. Interacts with MAGEL2. Interacts with MAP1LC3B. Interacts with HNF4A. Acetylated. Deacetylated by SIRT1, resulting in decreased protein stability. Deacetylated by SIRT6, preventing its degradation by the proteasome, resulting in increased protein stability. In terms of processing, phosphorylated by CSNK1E and CSNK1D. Phosphorylation results in PER2 protein degradation. May be dephosphorylated by PP1. Post-translationally, ubiquitinated, leading to its proteasomal degradation. Ubiquitination may be inhibited by CRY1. In the brain, high expression in SCN during the subjective day. Constitutive expression in the cornu ammonis and in the dentate gyrus of the hippocampus. Also expressed in the piriform cortex and the glomeruli of the olfactory bulb, and at a lower extent in the cerebral cortex. Not expressed in the pars tuberalis and the Purkinje neurons. Also expressed in adipose tissue (white and brown), heart, kidney, bladder, lumbar spinal cord, skeletal muscle, spleen, lung, pancreas and liver with highest levels in skeletal muscle and liver and lowest levels in spleen.

It is found in the nucleus. Its subcellular location is the cytoplasm. The protein localises to the perinuclear region. Transcriptional repressor which forms a core component of the circadian clock. The circadian clock, an internal time-keeping system, regulates various physiological processes through the generation of approximately 24 hour circadian rhythms in gene expression, which are translated into rhythms in metabolism and behavior. It is derived from the Latin roots 'circa' (about) and 'diem' (day) and acts as an important regulator of a wide array of physiological functions including metabolism, sleep, body temperature, blood pressure, endocrine, immune, cardiovascular, and renal function. Consists of two major components: the central clock, residing in the suprachiasmatic nucleus (SCN) of the brain, and the peripheral clocks that are present in nearly every tissue and organ system. Both the central and peripheral clocks can be reset by environmental cues, also known as Zeitgebers (German for 'timegivers'). The predominant Zeitgeber for the central clock is light, which is sensed by retina and signals directly to the SCN. The central clock entrains the peripheral clocks through neuronal and hormonal signals, body temperature and feeding-related cues, aligning all clocks with the external light/dark cycle. Circadian rhythms allow an organism to achieve temporal homeostasis with its environment at the molecular level by regulating gene expression to create a peak of protein expression once every 24 hours to control when a particular physiological process is most active with respect to the solar day. Transcription and translation of core clock components (CLOCK, NPAS2, BMAL1, BMAL2, PER1, PER2, PER3, CRY1 and CRY2) plays a critical role in rhythm generation, whereas delays imposed by post-translational modifications (PTMs) are important for determining the period (tau) of the rhythms (tau refers to the period of a rhythm and is the length, in time, of one complete cycle). A diurnal rhythm is synchronized with the day/night cycle, while the ultradian and infradian rhythms have a period shorter and longer than 24 hours, respectively. Disruptions in the circadian rhythms contribute to the pathology of cardiovascular diseases, cancer, metabolic syndrome and aging. A transcription/translation feedback loop (TTFL) forms the core of the molecular circadian clock mechanism. Transcription factors, CLOCK or NPAS2 and BMAL1 or BMAL2, form the positive limb of the feedback loop, act in the form of a heterodimer and activate the transcription of core clock genes and clock-controlled genes (involved in key metabolic processes), harboring E-box elements (5'-CACGTG-3') within their promoters. The core clock genes: PER1/2/3 and CRY1/2 which are transcriptional repressors form the negative limb of the feedback loop and interact with the CLOCK|NPAS2-BMAL1|BMAL2 heterodimer inhibiting its activity and thereby negatively regulating their own expression. This heterodimer also activates nuclear receptors NR1D1/2 and RORA/B/G, which form a second feedback loop and which activate and repress BMAL1 transcription, respectively. PER1 and PER2 proteins transport CRY1 and CRY2 into the nucleus with appropriate circadian timing, but also contribute directly to repression of clock-controlled target genes through interaction with several classes of RNA-binding proteins, helicases and others transcriptional repressors. PER appears to regulate circadian control of transcription by at least three different modes. First, interacts directly with the CLOCK-BMAL1 at the tail end of the nascent transcript peak to recruit complexes containing the SIN3-HDAC that remodel chromatin to repress transcription. Second, brings H3K9 methyltransferases such as SUV39H1 and SUV39H2 to the E-box elements of the circadian target genes, like PER2 itself or PER1. The recruitment of each repressive modifier to the DNA seems to be very precisely temporally orchestrated by the large PER complex, the deacetylases acting before than the methyltransferases. Additionally, large PER complexes are also recruited to the target genes 3' termination site through interactions with RNA-binding proteins and helicases that may play a role in transcription termination to regulate transcription independently of CLOCK-BMAL1 interactions. Recruitment of large PER complexes to the elongating polymerase at PER and CRY termination sites inhibited SETX action, impeding RNA polymerase II release and thereby repressing transcriptional reinitiation. May propagate clock information to metabolic pathways via the interaction with nuclear receptors. Coactivator of PPARA and corepressor of NR1D1, binds rhythmically at the promoter of nuclear receptors target genes like BMAL1 or G6PC1. Directly and specifically represses PPARG proadipogenic activity by blocking PPARG recruitment to target promoters and thereby transcriptional activation. Required for fatty acid and lipid metabolism, is involved as well in the regulation of circulating insulin levels. Plays an important role in the maintenance of cardiovascular functions through the regulation of NO and vasodilatatory prostaglandins production in aortas. Controls circadian glutamate uptake in synaptic vesicles through the regulation of VGLUT1 expression. May also be involved in the regulation of inflammatory processes. Represses the CLOCK-BMAL1 induced transcription of BHLHE40/DEC1 and ATF4. Negatively regulates the formation of the TIMELESS-CRY1 complex by competing with TIMELESS for binding to CRY1. This Mus musculus (Mouse) protein is Period circadian protein homolog 2 (Per2).